A 158-amino-acid polypeptide reads, in one-letter code: Regulator of sigma D (158 aa).

It belongs to the Rsd/AlgQ family. In terms of assembly, interacts with RpoD.

The protein localises to the cytoplasm. Binds RpoD and negatively regulates RpoD-mediated transcription activation by preventing the interaction between the primary sigma factor RpoD with the catalytic core of the RNA polymerase and with promoter DNA. May be involved in replacement of the RNA polymerase sigma subunit from RpoD to RpoS during the transition from exponential growth to the stationary phase. In Shigella boydii serotype 4 (strain Sb227), this protein is Regulator of sigma D.